The following is a 462-amino-acid chain: Probable Xaa-Pro aminopeptidase pepP (462 aa).

Mn(2+) contacts are provided by Asp259, Asp270, Glu393, and Glu433.

Belongs to the peptidase M24B family. Mn(2+) is required as a cofactor.

The enzyme catalyses Release of any N-terminal amino acid, including proline, that is linked to proline, even from a dipeptide or tripeptide.. Functionally, catalyzes the removal of a penultimate prolyl residue from the N-termini of peptides. This is Probable Xaa-Pro aminopeptidase pepP (pepP) from Metarhizium robertsii (strain ARSEF 23 / ATCC MYA-3075) (Metarhizium anisopliae (strain ARSEF 23)).